The sequence spans 484 residues: Sodium-dependent glucose transporter 1 (484 aa).

At S6 the chain carries Phosphoserine. The next 12 helical transmembrane spans lie at W40–L60, E80–F100, F106–C126, M135–L155, A168–W188, L227–A247, A274–G294, S317–L337, G340–F360, C366–I386, A401–L421, and L428–V448.

The protein belongs to the major facilitator superfamily. Expressed in brain, liver, lung, and kidney. In kidney expressed in cortex and inner medulla, in ascending thin limbs (ATLs) and lower descending thin limbs (DTLs). Primarily expressed in the proximal tubules of the kidney.

Its subcellular location is the apical cell membrane. Functionally, may function as a sodium-dependent glucose transporter. Potential channels for urea in the inner medulla of kidney. This is Sodium-dependent glucose transporter 1 from Rattus norvegicus (Rat).